Reading from the N-terminus, the 747-residue chain is Fibroblast growth factor receptor (747 aa).

A signal peptide spans 1 to 24 (MIQLQNTFIFIALTIFTSASTTSL). At 25–288 (KNETKPLNTI…TEEIPQDTHY (264 aa)) the chain is on the extracellular side. N-linked (GlcNAc...) asparagine glycans are attached at residues N26, N42, and N63. The tract at residues 47–68 (EEDLFDTNGAPKSDTVNASTTT) is disordered. 2 Ig-like C2-type domains span residues 74-167 (PRWV…YELD) and 175-267 (PPVL…AWLT). C99 and C151 are oxidised to a cystine. N-linked (GlcNAc...) asparagine glycans are attached at residues N161, N185, N217, N227, and N240. C198 and C251 are oxidised to a cystine. A helical transmembrane segment spans residues 289–309 (LIYIFGVVCFIILLAFIVYMC). The Cytoplasmic portion of the chain corresponds to 310 to 747 (NSRYQNKDPP…NGHARMQSDV (438 aa)). Residues 377–660 (ILLHERIDEG…QLVEDLDRML (284 aa)) enclose the Protein kinase domain. Residues 383–391 (IDEGFFGQV) and K412 contribute to the ATP site. Catalysis depends on D525, which acts as the Proton acceptor. At Y556 the chain carries Phosphotyrosine; by autocatalysis. The interval 679–731 (YLPSDVDSNEDTESRDSANATGEDSDSVFEPIDGHGAHAYEVDEAGPLLNPQP) is disordered. The segment covering 710–719 (IDGHGAHAYE) has biased composition (basic and acidic residues).

It belongs to the protein kinase superfamily. Tyr protein kinase family. Fibroblast growth factor receptor subfamily.

The protein resides in the membrane. The catalysed reaction is L-tyrosyl-[protein] + ATP = O-phospho-L-tyrosyl-[protein] + ADP + H(+). Its function is as follows. Receptor for basic fibroblast growth factor. This Ciona intestinalis (Transparent sea squirt) protein is Fibroblast growth factor receptor (FGFR).